The chain runs to 215 residues: Ribose-5-phosphate isomerase A (215 aa).

Residues 26 to 29 (TGST), 79 to 82 (DGAD), and 92 to 95 (KGGG) each bind substrate. Glutamate 101 functions as the Proton acceptor in the catalytic mechanism. Lysine 119 is a binding site for substrate.

Belongs to the ribose 5-phosphate isomerase family. As to quaternary structure, homodimer.

It catalyses the reaction aldehydo-D-ribose 5-phosphate = D-ribulose 5-phosphate. The protein operates within carbohydrate degradation; pentose phosphate pathway; D-ribose 5-phosphate from D-ribulose 5-phosphate (non-oxidative stage): step 1/1. In terms of biological role, catalyzes the reversible conversion of ribose-5-phosphate to ribulose 5-phosphate. The chain is Ribose-5-phosphate isomerase A from Xanthomonas campestris pv. campestris (strain 8004).